Reading from the N-terminus, the 232-residue chain is Phosphatidylserine decarboxylase proenzyme (232 aa).

S190 serves as the catalytic Schiff-base intermediate with substrate; via pyruvic acid. At S190 the chain carries Pyruvic acid (Ser); by autocatalysis.

Belongs to the phosphatidylserine decarboxylase family. PSD-A subfamily. Heterodimer of a large membrane-associated beta subunit and a small pyruvoyl-containing alpha subunit. Requires pyruvate as cofactor. In terms of processing, is synthesized initially as an inactive proenzyme. Formation of the active enzyme involves a self-maturation process in which the active site pyruvoyl group is generated from an internal serine residue via an autocatalytic post-translational modification. Two non-identical subunits are generated from the proenzyme in this reaction, and the pyruvate is formed at the N-terminus of the alpha chain, which is derived from the carboxyl end of the proenzyme. The post-translation cleavage follows an unusual pathway, termed non-hydrolytic serinolysis, in which the side chain hydroxyl group of the serine supplies its oxygen atom to form the C-terminus of the beta chain, while the remainder of the serine residue undergoes an oxidative deamination to produce ammonia and the pyruvoyl prosthetic group on the alpha chain.

Its subcellular location is the cell membrane. It catalyses the reaction a 1,2-diacyl-sn-glycero-3-phospho-L-serine + H(+) = a 1,2-diacyl-sn-glycero-3-phosphoethanolamine + CO2. The protein operates within phospholipid metabolism; phosphatidylethanolamine biosynthesis; phosphatidylethanolamine from CDP-diacylglycerol: step 2/2. Functionally, catalyzes the formation of phosphatidylethanolamine (PtdEtn) from phosphatidylserine (PtdSer). This chain is Phosphatidylserine decarboxylase proenzyme, found in Rhodopseudomonas palustris (strain ATCC BAA-98 / CGA009).